The following is a 153-amino-acid chain: Nucleoside diphosphate kinase (153 aa).

ATP-binding residues include Lys-13, Phe-61, Arg-89, Thr-95, Arg-106, and Asn-116. Catalysis depends on His-119, which acts as the Pros-phosphohistidine intermediate.

Belongs to the NDK family. Mg(2+) is required as a cofactor.

The protein resides in the cytoplasm. The protein localises to the cell membrane. The catalysed reaction is a 2'-deoxyribonucleoside 5'-diphosphate + ATP = a 2'-deoxyribonucleoside 5'-triphosphate + ADP. It carries out the reaction a ribonucleoside 5'-diphosphate + ATP = a ribonucleoside 5'-triphosphate + ADP. In terms of biological role, major role in the synthesis of nucleoside triphosphates other than ATP. The ATP gamma phosphate is transferred to the NDP beta phosphate via a ping-pong mechanism, using a phosphorylated active-site intermediate. This chain is Nucleoside diphosphate kinase, found in Gallus gallus (Chicken).